A 140-amino-acid chain; its full sequence is Heavy metal-associated isoprenylated plant protein 31 (140 aa).

One can recognise an HMA domain in the interval 3–67 (MTVEIRVPNL…AVRRAGKAAE (65 aa)). Residues Cys-14 and Cys-17 each coordinate a metal cation. Position 137 is a cysteine methyl ester (Cys-137). A lipid anchor (S-farnesyl cysteine) is attached at Cys-137. Residues 138–140 (TIM) constitute a propeptide, removed in mature form.

The protein belongs to the HIPP family.

In terms of biological role, heavy-metal-binding protein. The polypeptide is Heavy metal-associated isoprenylated plant protein 31 (Arabidopsis thaliana (Mouse-ear cress)).